The sequence spans 371 residues: Ubiquitin receptor RAD23b (371 aa).

One can recognise a Ubiquitin-like domain in the interval 1–79 (MKLTVKTLKG…LVVMLSKSKS (79 aa)). Low complexity predominate over residues 79 to 117 (SGGSAGQASVQTSSVSQPVSATTSSTKPAAPSTTQSSPV). Residues 79–142 (SGGSAGQASV…DTYGQAASTL (64 aa)) are disordered. The segment covering 128–142 (PAAQTDTYGQAASTL) has biased composition (polar residues). In terms of domain architecture, UBA 1 spans 146–189 (SSLEQMVQQIMEMGGGSWDKETVTRALRAAYNNPERAVDYLYSG). Positions 242–285 (GTLEFLRNNDQFQQLRTMVHSNPQILQPMLQELGKQNPQLLRLI) constitute an STI1 domain. The 41-residue stretch at 325 to 365 (PAEQEAIQRLEAMGFDRALVIEAFLACDRNEELAANYLLEN) folds into the UBA 2 domain.

The protein belongs to the RAD23 family. As to quaternary structure, interacts with 'Lys-48'-linked polyubiquitin chains. Interacts with RPN10 via its ubiquitin-like domain. Interacts with UBQ1, UBQ2, UBQ5, UBQ7, UBQ10, UBQ11 and IAA16. Binds to RAD4. As to expression, widely expressed in the whole plant.

The protein resides in the nucleus. It is found in the cytoplasm. Its function is as follows. May be involved in nucleotide excision repair. Binds and presumably selects ubiquitin-conjugates for destruction. Prefers multiubiquitin chains rather than single ubiquitins, with a binding affinity for 'Lys-48'-linked ubiquitin chains. Acts as a ubiquitin receptor that associates with the 26S proteasomal docking subunit RPN10 for the indirect recognition of ubiquitinated substrates of ubiquitin/26S proteasome-mediated proteolysis (UPP). Involved in UV tolerance in both roots and hypocotyls, specifically in dark conditions. This chain is Ubiquitin receptor RAD23b, found in Arabidopsis thaliana (Mouse-ear cress).